The chain runs to 324 residues: Autolytic lysozyme (324 aa).

Residues D5 and E91 contribute to the active site. Tandem repeats lie at residues 212-234 (LLKR…IKDF), 235-254 (QSIM…SGAA), 255-277 (QQIF…TRYI), 278-300 (QYRV…VAAW), and 301-324 (QSNQ…LDEN). The interval 212–324 (LLKRGLEVDG…ATWSKLLDEN (113 aa)) is 5 X 23 AA tandem repeats.

Belongs to the glycosyl hydrolase 25 family. In terms of assembly, monomer.

It localises to the secreted. The protein resides in the cytoplasm. It carries out the reaction Hydrolysis of (1-&gt;4)-beta-linkages between N-acetylmuramic acid and N-acetyl-D-glucosamine residues in a peptidoglycan and between N-acetyl-D-glucosamine residues in chitodextrins.. This Clostridium acetobutylicum (strain ATCC 824 / DSM 792 / JCM 1419 / IAM 19013 / LMG 5710 / NBRC 13948 / NRRL B-527 / VKM B-1787 / 2291 / W) protein is Autolytic lysozyme (lyc).